The chain runs to 362 residues: MAHARVLLLALAVLATAAVAVASSSSFADSNPIRPVTDRAASTLESAVLGALGRTRHALRFARFAVRYGKSYESAAEVRRRFRIFSESLEEVRSTNRKGLPYRLGINRFSDMSWEEFQATRLGAAQTCSATLAGNHLMRDAAALPETKDWREDGIVSPVKNQAHCGSCWTFSTTGALEAAYTQATGKNISLSEQQLVDCAGGFNNFGCNGGLPSQAFEYIKYNGGIDTEESYPYKGVNGVCHYKAENAAVQVLDSVNITLNAEDELKNAVGLVRPVSVAFQVIDGFRQYKSGVYTSDHCGTTPDDVNHAVLAVGYGVENGVPYWLIKNSWGADWGDNGYFKMEMGKNMCAIATCASYPVVAA.

The signal sequence occupies residues 1–22 (MAHARVLLLALAVLATAAVAVA). Residues 23–143 (SSSSFADSNP…GNHLMRDAAA (121 aa)) constitute a propeptide, activation peptide. Cystine bridges form between Cys-165/Cys-208 and Cys-199/Cys-241. Cys-168 is an active-site residue. An N-linked (GlcNAc...) asparagine glycan is attached at Asn-188. Residue Asn-257 is glycosylated (N-linked (GlcNAc...) asparagine). Cysteines 299 and 349 form a disulfide. Active-site residues include His-308 and Asn-328.

Belongs to the peptidase C1 family.

The protein localises to the vacuole. It carries out the reaction Hydrolysis of proteins, acting as an aminopeptidase (notably, cleaving Arg-|-Xaa bonds) as well as an endopeptidase.. In terms of biological role, may play a role in proteolysis leading to mobilization of nitrogen during senescence and starvation. The protein is Thiol protease aleurain of Hordeum vulgare (Barley).